We begin with the raw amino-acid sequence, 126 residues long: Small ribosomal subunit protein uS13 (126 aa).

The segment at 94-126 (RNLPVHGQRTHTNARTRKGPRRAIAGKKKAGKK) is disordered.

This sequence belongs to the universal ribosomal protein uS13 family. In terms of assembly, part of the 30S ribosomal subunit. Forms a loose heterodimer with protein S19. Forms two bridges to the 50S subunit in the 70S ribosome.

Its function is as follows. Located at the top of the head of the 30S subunit, it contacts several helices of the 16S rRNA. In the 70S ribosome it contacts the 23S rRNA (bridge B1a) and protein L5 of the 50S subunit (bridge B1b), connecting the 2 subunits; these bridges are implicated in subunit movement. Contacts the tRNAs in the A and P-sites. The protein is Small ribosomal subunit protein uS13 of Parafrankia sp. (strain EAN1pec).